A 648-amino-acid chain; its full sequence is Macrolide export ATP-binding/permease protein MacB (648 aa).

The region spanning Leu5–Thr243 is the ABC transporter domain. Gly41–Ser48 contributes to the ATP binding site. The next 4 helical transmembrane spans lie at Leu273 to Gly293, Leu523 to Ile543, Ala576 to Phe596, and Pro611 to Leu631.

The protein belongs to the ABC transporter superfamily. Macrolide exporter (TC 3.A.1.122) family. As to quaternary structure, homodimer. Part of the tripartite efflux system MacAB-TolC, which is composed of an inner membrane transporter, MacB, a periplasmic membrane fusion protein, MacA, and an outer membrane component, TolC. The complex forms a large protein conduit and can translocate molecules across both the inner and outer membranes. Interacts with MacA.

The protein resides in the cell inner membrane. Its function is as follows. Part of the tripartite efflux system MacAB-TolC. MacB is a non-canonical ABC transporter that contains transmembrane domains (TMD), which form a pore in the inner membrane, and an ATP-binding domain (NBD), which is responsible for energy generation. Confers resistance against macrolides. The polypeptide is Macrolide export ATP-binding/permease protein MacB (Escherichia coli O6:K15:H31 (strain 536 / UPEC)).